The chain runs to 124 residues: Small ribosomal subunit protein uS12cz/uS12cy (124 aa).

It belongs to the universal ribosomal protein uS12 family. Part of the 30S ribosomal subunit.

Its subcellular location is the plastid. It localises to the chloroplast. Its function is as follows. With S4 and S5 plays an important role in translational accuracy. Located at the interface of the 30S and 50S subunits. This is Small ribosomal subunit protein uS12cz/uS12cy (rps12-A) from Agrostis stolonifera (Creeping bentgrass).